We begin with the raw amino-acid sequence, 273 residues long: Ribosomal RNA small subunit methyltransferase A (273 aa).

Asn-18, Leu-20, Gly-45, Glu-66, Asp-91, and Asn-113 together coordinate S-adenosyl-L-methionine.

Belongs to the class I-like SAM-binding methyltransferase superfamily. rRNA adenine N(6)-methyltransferase family. RsmA subfamily.

The protein resides in the cytoplasm. It carries out the reaction adenosine(1518)/adenosine(1519) in 16S rRNA + 4 S-adenosyl-L-methionine = N(6)-dimethyladenosine(1518)/N(6)-dimethyladenosine(1519) in 16S rRNA + 4 S-adenosyl-L-homocysteine + 4 H(+). Its function is as follows. Specifically dimethylates two adjacent adenosines (A1518 and A1519) in the loop of a conserved hairpin near the 3'-end of 16S rRNA in the 30S particle. May play a critical role in biogenesis of 30S subunits. This Escherichia coli (strain 55989 / EAEC) protein is Ribosomal RNA small subunit methyltransferase A.